Consider the following 136-residue polypeptide: Small ribosomal subunit protein uS9 (136 aa).

Belongs to the universal ribosomal protein uS9 family.

This is Small ribosomal subunit protein uS9 from Borreliella afzelii (strain PKo) (Borrelia afzelii).